Consider the following 213-residue polypeptide: 3,4-dihydroxy-2-butanone 4-phosphate synthase (213 aa).

D-ribulose 5-phosphate is bound by residues 37-38, D42, 150-154, and E174; these read RE and RSGHT. E38 contacts Mg(2+). H153 contributes to the Mg(2+) binding site.

This sequence belongs to the DHBP synthase family. In terms of assembly, homodimer. Mg(2+) serves as cofactor. Requires Mn(2+) as cofactor.

It catalyses the reaction D-ribulose 5-phosphate = (2S)-2-hydroxy-3-oxobutyl phosphate + formate + H(+). It participates in cofactor biosynthesis; riboflavin biosynthesis; 2-hydroxy-3-oxobutyl phosphate from D-ribulose 5-phosphate: step 1/1. Catalyzes the conversion of D-ribulose 5-phosphate to formate and 3,4-dihydroxy-2-butanone 4-phosphate. The sequence is that of 3,4-dihydroxy-2-butanone 4-phosphate synthase from Blochmanniella floridana.